The primary structure comprises 224 residues: Transcription factor MYB1 (224 aa).

HTH myb-type domains lie at 10–66 and 67–117; these read LGRV…KPSI and KRGH…YKKH. 2 consecutive DNA-binding regions (H-T-H motif) follow at residues 38-62 and 90-113; these read WKRV…LNYL and WSLI…NTHL.

The protein localises to the nucleus. Its function is as follows. Activates DODA1 and CYP76AD1 in the betalain red pigment pathway. This chain is Transcription factor MYB1, found in Beta vulgaris (Sugar beet).